Here is a 407-residue protein sequence, read N- to C-terminus: Snake venom metalloproteinase ACLH (407 aa).

The first 20 residues, 1-20, serve as a signal peptide directing secretion; the sequence is MIQVLLVTLCLAAFPYQGSS. A propeptide spanning residues 21–187 is cleaved from the precursor; the sequence is IILESGNVND…PIKKASQLNL (167 aa). In terms of domain architecture, Peptidase M12B spans 193–389; the sequence is RYVELVTVVD…ENPQCILNKP (197 aa). The Ca(2+) site is built by Glu-196 and Asp-280. Disulfide bonds link Cys-304–Cys-384, Cys-344–Cys-368, and Cys-346–Cys-351. His-329 contributes to the Zn(2+) binding site. The active site involves Glu-330. The Zn(2+) site is built by His-333 and His-339. A glycan (N-linked (GlcNAc...) asparagine) is linked at Asn-367. Residues Cys-384 and Asn-387 each contribute to the Ca(2+) site.

The protein belongs to the venom metalloproteinase (M12B) family. P-I subfamily. In terms of assembly, monomer. Requires Zn(2+) as cofactor. Contains sialic acid terminally alpha(2-6)-linked to galactose in a complex N-glycan chain. Expressed by the venom gland.

The protein localises to the secreted. Functionally, this zinc hemorrhagic metalloproteinase has fibrino(geno)lytic activities. It causes hemorrhage and has myonecrotic activity on both fiber types I and II. The recombinant enzyme, without post-translational modifications, also has proteolytic activity, but does not show any hemorrhagic activity. This Agkistrodon contortrix laticinctus (Broad-banded copperhead) protein is Snake venom metalloproteinase ACLH.